The primary structure comprises 320 residues: Geranylgeranyl pyrophosphate synthase (320 aa).

The isopentenyl diphosphate site is built by Lys-35, Arg-38, and His-67. 2 residues coordinate Mg(2+): Asp-74 and Asp-78. Position 83 (Arg-83) interacts with dimethylallyl diphosphate. Arg-84 contributes to the isopentenyl diphosphate binding site. Dimethylallyl diphosphate contacts are provided by Lys-168, Thr-169, Gln-206, Lys-223, and Lys-233.

This sequence belongs to the FPP/GGPP synthase family. Mg(2+) is required as a cofactor.

The protein resides in the cytoplasm. It carries out the reaction isopentenyl diphosphate + dimethylallyl diphosphate = (2E)-geranyl diphosphate + diphosphate. The enzyme catalyses isopentenyl diphosphate + (2E)-geranyl diphosphate = (2E,6E)-farnesyl diphosphate + diphosphate. It catalyses the reaction isopentenyl diphosphate + (2E,6E)-farnesyl diphosphate = (2E,6E,10E)-geranylgeranyl diphosphate + diphosphate. Its pathway is isoprenoid biosynthesis; farnesyl diphosphate biosynthesis; farnesyl diphosphate from geranyl diphosphate and isopentenyl diphosphate: step 1/1. It participates in isoprenoid biosynthesis; geranyl diphosphate biosynthesis; geranyl diphosphate from dimethylallyl diphosphate and isopentenyl diphosphate: step 1/1. The protein operates within isoprenoid biosynthesis; geranylgeranyl diphosphate biosynthesis; geranylgeranyl diphosphate from farnesyl diphosphate and isopentenyl diphosphate: step 1/1. Its function is as follows. Catalyzes the trans-addition of the 3 molecules of IPP onto DMAPP to form geranylgeranyl pyrophosphate. May be involved in vesicle trafficking and protein sorting. This is Geranylgeranyl pyrophosphate synthase (BTS1) from Eremothecium gossypii (strain ATCC 10895 / CBS 109.51 / FGSC 9923 / NRRL Y-1056) (Yeast).